A 262-amino-acid polypeptide reads, in one-letter code: uncharacterized protein (262 aa).

The next 3 helical transmembrane spans lie at 4-24 (LIVF…RFLG), 28-48 (VSRF…CLFR), and 62-82 (CYLA…SHIL). The stretch at 152-181 (EREARAQEHDRISAEVETITSACENLEAAM) forms a coiled coil.

The protein localises to the mitochondrion membrane. This is an uncharacterized protein from Arabidopsis thaliana (Mouse-ear cress).